The chain runs to 298 residues: ATP phosphoribosyltransferase (298 aa).

The protein belongs to the ATP phosphoribosyltransferase family. Long subfamily. It depends on Mg(2+) as a cofactor.

Its subcellular location is the cytoplasm. The enzyme catalyses 1-(5-phospho-beta-D-ribosyl)-ATP + diphosphate = 5-phospho-alpha-D-ribose 1-diphosphate + ATP. It participates in amino-acid biosynthesis; L-histidine biosynthesis; L-histidine from 5-phospho-alpha-D-ribose 1-diphosphate: step 1/9. Feedback inhibited by histidine. In terms of biological role, catalyzes the condensation of ATP and 5-phosphoribose 1-diphosphate to form N'-(5'-phosphoribosyl)-ATP (PR-ATP). Has a crucial role in the pathway because the rate of histidine biosynthesis seems to be controlled primarily by regulation of HisG enzymatic activity. The chain is ATP phosphoribosyltransferase from Aeromonas hydrophila subsp. hydrophila (strain ATCC 7966 / DSM 30187 / BCRC 13018 / CCUG 14551 / JCM 1027 / KCTC 2358 / NCIMB 9240 / NCTC 8049).